Reading from the N-terminus, the 284-residue chain is Proton-translocating ferredoxin:NAD(+) oxidoreductase complex subunit B (284 aa).

A hydrophobic region spans residues 1–26 (MNTVIMILVVMTIIGLIFGLVLAYVN). One can recognise a 4Fe-4S domain in the interval 32-92 (EVNPLVDLVE…AEQVAKLTGK (61 aa)). [4Fe-4S] cluster-binding residues include cysteine 49, cysteine 52, cysteine 57, cysteine 75, cysteine 138, cysteine 142, cysteine 148, cysteine 152, cysteine 172, cysteine 175, cysteine 178, cysteine 182, cysteine 217, cysteine 220, cysteine 223, cysteine 227, cysteine 246, cysteine 249, cysteine 254, and cysteine 258. 4Fe-4S ferredoxin-type domains lie at 133–162 (GGPK…MGSN), 163–192 (GLPI…FRPV), 206–237 (GGAV…VENN), and 239–269 (AVVD…IVSG).

The protein belongs to the 4Fe4S bacterial-type ferredoxin family. RnfB subfamily. The complex is composed of six subunits: RnfA, RnfB, RnfC, RnfD, RnfE and RnfG. It depends on [4Fe-4S] cluster as a cofactor.

Its subcellular location is the cell membrane. Functionally, part of a membrane-bound complex that couples electron transfer with translocation of ions across the membrane. Couples electron transfer from reduced ferredoxin to NAD(+) with translocation of H(+) out of the cell. Essential for energy conservation during autotrophic growth. Contributes to ATP synthesis during heterotrophic growth. This chain is Proton-translocating ferredoxin:NAD(+) oxidoreductase complex subunit B, found in Clostridium ljungdahlii (strain ATCC 55383 / DSM 13528 / PETC).